The following is a 102-amino-acid chain: Co-chaperonin GroES (102 aa).

Belongs to the GroES chaperonin family. Heptamer of 7 subunits arranged in a ring. Interacts with the chaperonin GroEL.

Its subcellular location is the cytoplasm. Functionally, together with the chaperonin GroEL, plays an essential role in assisting protein folding. The GroEL-GroES system forms a nano-cage that allows encapsulation of the non-native substrate proteins and provides a physical environment optimized to promote and accelerate protein folding. GroES binds to the apical surface of the GroEL ring, thereby capping the opening of the GroEL channel. The polypeptide is Co-chaperonin GroES (Streptomyces coelicolor (strain ATCC BAA-471 / A3(2) / M145)).